The sequence spans 664 residues: Transketolase 1 (664 aa).

A substrate-binding site is contributed by His26. Residues His66 and 114–116 (GPL) each bind thiamine diphosphate. Asp155 is a binding site for Mg(2+). The thiamine diphosphate site is built by Gly156 and Asn185. 2 residues coordinate Mg(2+): Asn185 and Ile187. 3 residues coordinate substrate: His260, Arg357, and Ser384. Thiamine diphosphate is bound at residue His260. The Proton donor role is filled by Glu411. Residue Phe437 participates in thiamine diphosphate binding. The substrate site is built by His461, Asp469, and Arg520.

The protein belongs to the transketolase family. In terms of assembly, homodimer. It depends on Mg(2+) as a cofactor. Requires Ca(2+) as cofactor. The cofactor is Mn(2+). Co(2+) is required as a cofactor. Thiamine diphosphate serves as cofactor.

The catalysed reaction is D-sedoheptulose 7-phosphate + D-glyceraldehyde 3-phosphate = aldehydo-D-ribose 5-phosphate + D-xylulose 5-phosphate. Its function is as follows. Catalyzes the transfer of a two-carbon ketol group from a ketose donor to an aldose acceptor, via a covalent intermediate with the cofactor thiamine pyrophosphate. In Vibrio parahaemolyticus serotype O3:K6 (strain RIMD 2210633), this protein is Transketolase 1 (tkt1).